Here is a 454-residue protein sequence, read N- to C-terminus: O-phospho-L-seryl-tRNA:Cys-tRNA synthase 2 (454 aa).

Residues 146–147, Asn-251, and 274–276 contribute to the pyridoxal 5'-phosphate site; these read AR and SGH. Lys-277 carries the N6-(pyridoxal phosphate)lysine modification.

Belongs to the SepCysS family. Homodimer. Interacts with SepRS. It depends on pyridoxal 5'-phosphate as a cofactor.

It catalyses the reaction O-phospho-L-seryl-tRNA(Cys) + hydrogen sulfide + H(+) = L-cysteinyl-tRNA(Cys) + phosphate. Converts O-phospho-L-seryl-tRNA(Cys) (Sep-tRNA(Cys)) to L-cysteinyl-tRNA(Cys) (Cys-tRNA(Cys)). The polypeptide is O-phospho-L-seryl-tRNA:Cys-tRNA synthase 2 (Methanoregula boonei (strain DSM 21154 / JCM 14090 / 6A8)).